The sequence spans 565 residues: CTP synthase (565 aa).

Positions 1–272 (MARPKNVKHI…DLRVLKKLGL (272 aa)) are amidoligase domain. Serine 18 is a binding site for CTP. Serine 18 serves as a coordination point for UTP. Position 19–24 (19–24 (SLGKGI)) interacts with ATP. Position 59 (tyrosine 59) interacts with L-glutamine. Residue aspartate 76 participates in ATP binding. Aspartate 76 and glutamate 146 together coordinate Mg(2+). CTP contacts are provided by residues 153–155 (DIE), 193–198 (KTKPTQ), and lysine 229. UTP-binding positions include 193-198 (KTKPTQ) and lysine 229. The Glutamine amidotransferase type-1 domain maps to 299 to 543 (TIGICGKYTE…VAAAKEYAHG (245 aa)). Residue glycine 363 participates in L-glutamine binding. The active-site Nucleophile; for glutamine hydrolysis is cysteine 390. L-glutamine is bound by residues 391–394 (LGMQ), glutamate 414, and arginine 471. Catalysis depends on residues histidine 516 and glutamate 518.

The protein belongs to the CTP synthase family. As to quaternary structure, homotetramer.

It carries out the reaction UTP + L-glutamine + ATP + H2O = CTP + L-glutamate + ADP + phosphate + 2 H(+). The catalysed reaction is L-glutamine + H2O = L-glutamate + NH4(+). It catalyses the reaction UTP + NH4(+) + ATP = CTP + ADP + phosphate + 2 H(+). Its pathway is pyrimidine metabolism; CTP biosynthesis via de novo pathway; CTP from UDP: step 2/2. With respect to regulation, allosterically activated by GTP, when glutamine is the substrate; GTP has no effect on the reaction when ammonia is the substrate. The allosteric effector GTP functions by stabilizing the protein conformation that binds the tetrahedral intermediate(s) formed during glutamine hydrolysis. Inhibited by the product CTP, via allosteric rather than competitive inhibition. Catalyzes the ATP-dependent amination of UTP to CTP with either L-glutamine or ammonia as the source of nitrogen. Regulates intracellular CTP levels through interactions with the four ribonucleotide triphosphates. This Pelodictyon phaeoclathratiforme (strain DSM 5477 / BU-1) protein is CTP synthase.